Consider the following 276-residue polypeptide: S-adenosylmethionine decarboxylase proenzyme (276 aa).

The active-site Schiff-base intermediate with substrate; via pyruvic acid is serine 124. The residue at position 124 (serine 124) is a Pyruvic acid (Ser); by autocatalysis. Catalysis depends on histidine 129, which acts as the Proton acceptor; for processing activity. Residue cysteine 152 is the Proton donor; for catalytic activity of the active site.

This sequence belongs to the prokaryotic AdoMetDC family. Type 2 subfamily. In terms of assembly, heterooctamer of four alpha and four beta chains arranged as a tetramer of alpha/beta heterodimers. Requires pyruvate as cofactor. Post-translationally, is synthesized initially as an inactive proenzyme. Formation of the active enzyme involves a self-maturation process in which the active site pyruvoyl group is generated from an internal serine residue via an autocatalytic post-translational modification. Two non-identical subunits are generated from the proenzyme in this reaction, and the pyruvate is formed at the N-terminus of the alpha chain, which is derived from the carboxyl end of the proenzyme. The post-translation cleavage follows an unusual pathway, termed non-hydrolytic serinolysis, in which the side chain hydroxyl group of the serine supplies its oxygen atom to form the C-terminus of the beta chain, while the remainder of the serine residue undergoes an oxidative deamination to produce ammonia and the pyruvoyl group blocking the N-terminus of the alpha chain.

It catalyses the reaction S-adenosyl-L-methionine + H(+) = S-adenosyl 3-(methylsulfanyl)propylamine + CO2. It functions in the pathway amine and polyamine biosynthesis; S-adenosylmethioninamine biosynthesis; S-adenosylmethioninamine from S-adenosyl-L-methionine: step 1/1. Functionally, catalyzes the decarboxylation of S-adenosylmethionine to S-adenosylmethioninamine (dcAdoMet), the propylamine donor required for the synthesis of the polyamines spermine and spermidine from the diamine putrescine. This is S-adenosylmethionine decarboxylase proenzyme from Desulfitobacterium hafniense (strain Y51).